The chain runs to 157 residues: Cyclic pyranopterin monophosphate synthase (157 aa).

Substrate-binding positions include 75 to 77 (LCH) and 111 to 112 (ME). The active site involves D126.

It belongs to the MoaC family. As to quaternary structure, homohexamer; trimer of dimers.

The enzyme catalyses (8S)-3',8-cyclo-7,8-dihydroguanosine 5'-triphosphate = cyclic pyranopterin phosphate + diphosphate. It participates in cofactor biosynthesis; molybdopterin biosynthesis. Catalyzes the conversion of (8S)-3',8-cyclo-7,8-dihydroguanosine 5'-triphosphate to cyclic pyranopterin monophosphate (cPMP). This Novosphingobium aromaticivorans (strain ATCC 700278 / DSM 12444 / CCUG 56034 / CIP 105152 / NBRC 16084 / F199) protein is Cyclic pyranopterin monophosphate synthase.